The following is a 309-amino-acid chain: Homoserine kinase (309 aa).

95 to 105 (PQSRGLGSSAA) is an ATP binding site.

It belongs to the GHMP kinase family. Homoserine kinase subfamily.

It localises to the cytoplasm. The catalysed reaction is L-homoserine + ATP = O-phospho-L-homoserine + ADP + H(+). Its pathway is amino-acid biosynthesis; L-threonine biosynthesis; L-threonine from L-aspartate: step 4/5. Functionally, catalyzes the ATP-dependent phosphorylation of L-homoserine to L-homoserine phosphate. The polypeptide is Homoserine kinase (Corynebacterium efficiens (strain DSM 44549 / YS-314 / AJ 12310 / JCM 11189 / NBRC 100395)).